Here is a 248-residue protein sequence, read N- to C-terminus: 5'-nucleotidase SurE (248 aa).

Asp8, Asp9, Ser39, and Asn91 together coordinate a divalent metal cation.

This sequence belongs to the SurE nucleotidase family. It depends on a divalent metal cation as a cofactor.

The protein resides in the cytoplasm. The enzyme catalyses a ribonucleoside 5'-phosphate + H2O = a ribonucleoside + phosphate. Its function is as follows. Nucleotidase that shows phosphatase activity on nucleoside 5'-monophosphates. This Geobacter sp. (strain M21) protein is 5'-nucleotidase SurE.